A 682-amino-acid chain; its full sequence is Polyadenylate-binding protein 5 (682 aa).

4 consecutive RRM domains span residues 59-136 (SSLY…LSNR), 146-223 (GNVF…HFVR), 239-316 (TNVY…RAQK), and 342-419 (SNLY…LAQR). One can recognise a PABC domain in the interval 588–665 (TISKLASDLA…ALDVLRRSAD (78 aa)). Ser-600 is modified (phosphoserine).

It belongs to the polyadenylate-binding protein type-1 family. In terms of tissue distribution, expressed predominantly in immature flowers but also at lower levels in mature flowers and siliques. Detected in tapetum, pollen, ovules and developing seeds. Also detected in primary inflorescences and immature siliques.

It localises to the cytoplasm. The protein resides in the nucleus. Functionally, binds the poly(A) tail of mRNA. Appears to be an important mediator of the multiple roles of the poly(A) tail in mRNA biogenesis, stability and translation. In Arabidopsis thaliana (Mouse-ear cress), this protein is Polyadenylate-binding protein 5 (PAB5).